Consider the following 344-residue polypeptide: Phosphoribosylformylglycinamidine cyclo-ligase (344 aa).

It belongs to the AIR synthase family.

The protein resides in the cytoplasm. The catalysed reaction is 2-formamido-N(1)-(5-O-phospho-beta-D-ribosyl)acetamidine + ATP = 5-amino-1-(5-phospho-beta-D-ribosyl)imidazole + ADP + phosphate + H(+). It participates in purine metabolism; IMP biosynthesis via de novo pathway; 5-amino-1-(5-phospho-D-ribosyl)imidazole from N(2)-formyl-N(1)-(5-phospho-D-ribosyl)glycinamide: step 2/2. The sequence is that of Phosphoribosylformylglycinamidine cyclo-ligase from Anaeromyxobacter sp. (strain Fw109-5).